The following is a 578-amino-acid chain: Dystrotelin (578 aa).

Residues 223–279 (THPARCTLCRTFPITGLRYRCLKCLNFDICQMCFLSGLHSKSHQKSHPVIEHCIQMS) form a ZZ-type zinc finger. The Zn(2+) site is built by Cys228, Cys231, Cys243, Cys246, Cys252, Cys255, His265, and His269. Residues 322 to 351 (HHAQARLLKKQLNQYKDKLQAIYTSQEERI) adopt a coiled-coil conformation. The disordered stretch occupies residues 382-475 (RLQPPGPSSS…QSQTQKMPQK (94 aa)). Basic and acidic residues-rich tracts occupy residues 399–410 (KVDHSSTEKVPK) and 431–451 (PKLD…HALR). Polar residues predominate over residues 455–472 (SPETTLHSTRAQSQTQKM). The stretch at 503–537 (ALAAVEKKEAGNIKERKDELEEEELQELLSKLMDA) forms a coiled coil.

Its subcellular location is the cell membrane. This chain is Dystrotelin (DYTN), found in Homo sapiens (Human).